A 589-amino-acid polypeptide reads, in one-letter code: Putative ABC transporter ATP-binding protein MG015 (589 aa).

A run of 6 helical transmembrane segments spans residues 9-29 (LLYV…NPIL), 66-86 (LTIV…FNVA), 161-181 (LIFL…ATLI), 251-271 (IFLF…SISI), 280-300 (IPSF…IASL), and 303-323 (ITLA…GVVS). Positions 9–319 (LLYVFLCIVL…IFTLWNLVQL (311 aa)) constitute an ABC transmembrane type-1 domain. Residues 352 to 586 (IRFENVAFGY…NGFYARLKQS (235 aa)) form the ABC transporter domain. 385–392 (GPTGAGKS) contributes to the ATP binding site.

This sequence belongs to the ABC transporter superfamily.

Its subcellular location is the cell membrane. This chain is Putative ABC transporter ATP-binding protein MG015, found in Mycoplasma genitalium (strain ATCC 33530 / DSM 19775 / NCTC 10195 / G37) (Mycoplasmoides genitalium).